A 120-amino-acid chain; its full sequence is Prefoldin subunit beta (120 aa).

The protein belongs to the prefoldin subunit beta family. In terms of assembly, heterohexamer of two alpha and four beta subunits.

The protein resides in the cytoplasm. In terms of biological role, molecular chaperone capable of stabilizing a range of proteins. Seems to fulfill an ATP-independent, HSP70-like function in archaeal de novo protein folding. The polypeptide is Prefoldin subunit beta (Methanospirillum hungatei JF-1 (strain ATCC 27890 / DSM 864 / NBRC 100397 / JF-1)).